The primary structure comprises 238 residues: Ribonuclease PH (238 aa).

Residues arginine 86 and 124–126 contribute to the phosphate site; that span reads GTR.

The protein belongs to the RNase PH family. As to quaternary structure, homohexameric ring arranged as a trimer of dimers.

The catalysed reaction is tRNA(n+1) + phosphate = tRNA(n) + a ribonucleoside 5'-diphosphate. In terms of biological role, phosphorolytic 3'-5' exoribonuclease that plays an important role in tRNA 3'-end maturation. Removes nucleotide residues following the 3'-CCA terminus of tRNAs; can also add nucleotides to the ends of RNA molecules by using nucleoside diphosphates as substrates, but this may not be physiologically important. Probably plays a role in initiation of 16S rRNA degradation (leading to ribosome degradation) during starvation. This Haemophilus influenzae (strain PittEE) protein is Ribonuclease PH.